Consider the following 245-residue polypeptide: Thiopurine S-methyltransferase (245 aa).

Ser-14 carries the post-translational modification Phosphoserine. Residue 29-40 coordinates S-adenosyl-L-methionine; that stretch reads WQDKWVNGKTAF. Residue Phe-40 participates in substrate binding. Lys-58 is subject to N6-acetyllysine. Residues Leu-69, Glu-90, 134–135, and Arg-152 contribute to the S-adenosyl-L-methionine site; that span reads SI.

This sequence belongs to the class I-like SAM-binding methyltransferase superfamily. TPMT family. As to quaternary structure, monomer.

Its subcellular location is the cytoplasm. It catalyses the reaction S-adenosyl-L-methionine + a thiopurine = S-adenosyl-L-homocysteine + a thiopurine S-methylether.. This chain is Thiopurine S-methyltransferase (TPMT), found in Gorilla gorilla gorilla (Western lowland gorilla).